The primary structure comprises 1289 residues: MNILKHFPSYVGPSKIRTLVIPIGHWTRKEFNNAVQKLSEFNEIHLSDVTPIDSPIFTPQGFPHGKLFFDFLTIDHDDALELFLYDFEPFRKTFVIIGLVNDYSDPLTNLNFMKEKYPTLISPNLVYASSTPTKELEQTIDTMENVFASSPDMQKNIETIMCDIARNFLTALNSYYSSYKHVTLRSPGAIGGNAVLKTTLIRQNSYTSSSSSTPMSAVQSSVSSSSKAGSVTTASKRLSSFEMTTNSLKRSASLKLATTLSTSENRSQQKSLGRQMKILGNFQLLAGRYVDALNSFVDAITTLYKVRDYLWLGSALDGISICFLLLSYLGLSYQIPQIVSLICPVEKLNFESSSTGISPVDSNSKATASTTASSTPRNSISIAAMQSPRNSIMSLSAPALNIDVENINLPLLIKCISDKVLYYYDLSLMHNSEYAPQVVYCEFLLKTLTFMTSCYKSSEFSKDVLDNIVKNQHRALSDIPNSPMFPRFEVYFYSNKLFELQLKEMQVEAQIKIYSTMAEVYRLLGYKRKQLFVLRLLMVALLATPNKIAWHPDYRTLIDTIIELLNINESEAKINVDDPSQSTWLILQKKILQLCIKVSRKINDFEYVAKFSSILITKYTHLLNQSEQDALFKEYIQPSITNESITSYWDPFILREVVINRILDSDPTSNEIPLESDVSSLESLENRQKTQDINPQEVFNPFKRVQPTSFVSNNSTKVPILVFLVGDKAEFTCRVQNPFKFDFTINDIQLDEEISEFCEIDRKAVSYSGPYNVKAESIRSITLPLIIKKPTYKKIYEISCLKISILKLPLQKFDIINDSRRSNPVEEEAEYSKCIYGKLKIKILPEQPQLELLSTSKMTRNSWMMLDGTKTDFHITVRNKSLSCAINHIKIIPMNNIEQMLKPDYWKKMPPDDLYIMEKQLDWLSKSCVRIIKLPTVIKPNETITFDLELDNTAVPFNFTGFDLLIEYGMSATDESCIYLKKLSIPYEVTLRRTIEVPSMDIIPLNELFSSQVENVDWIEYVMSKIRAESNLHSRDFILLLLDFRNSWIDGIKLNVQFEDFTSNEYHVEASHTSRIIVPIKKIDYKKYNFENTPIPRIYPGRQFIQSGLNEEQTIEMRQKFWCREHIISKLKCNWKLTTDQSVTGSVDFNKFIEKFDHKMVYTIYPGRLFYGVQLLLDEPKVKVGEIINLKIITEPTSTCRRKQNSTVNFLDIVIFDSKTSKILPRSNRRILYNGSLTKPISTTKVSEINLEIIPIEKGRYEFSVCISKSNNQDGIIQFDSENVILSVI.

Residues 354–365 (STGISPVDSNSK) are compositionally biased toward polar residues. A disordered region spans residues 354–374 (STGISPVDSNSKATASTTASS). 2 positions are modified to phosphoserine: serine 379 and serine 387.

Belongs to the TRS120 family. Part of the multisubunit TRAPP (transport protein particle) II complex composed of BET3, BET5, TRS20, TRS23, TRS31, TRS33, TRS65, TRS120 and TRS130. Interacts directly with TRS65.

Its subcellular location is the golgi apparatus. The protein resides in the cis-Golgi network. Its function is as follows. Specific subunit of the TRAPP II complex, a highly conserved vesicle tethering complex that functions in the late Golgi as a guanine nucleotide exchanger (GEF) for the Golgi YPT1 GTPase. TRS120 plays a role in the YPT GEF activity of TRAPP II in concert with the two other TRAPP II-specific subunits TRS65 and TRS130. The sequence is that of Trafficking protein particle complex II-specific subunit 120 (TRS120) from Saccharomyces cerevisiae (strain ATCC 204508 / S288c) (Baker's yeast).